The primary structure comprises 158 residues: Dysbindin domain-containing protein 1 (158 aa).

Disordered regions lie at residues 1 to 50 and 93 to 158; these read MEPP…VPAP and ADSD…PQED. Ser-95 and Ser-119 each carry phosphoserine. Positions 125 to 141 are enriched in basic and acidic residues; that stretch reads TRAEQSHEKQPLGDPER.

It belongs to the dysbindin family.

The sequence is that of Dysbindin domain-containing protein 1 (DBNDD1) from Homo sapiens (Human).